A 209-amino-acid chain; its full sequence is Ribosomal RNA small subunit methyltransferase G (209 aa).

S-adenosyl-L-methionine-binding positions include Gly71, Phe76, 122–123 (AE), and Arg135.

Belongs to the methyltransferase superfamily. RNA methyltransferase RsmG family.

It localises to the cytoplasm. In terms of biological role, specifically methylates the N7 position of a guanine in 16S rRNA. This Flavobacterium psychrophilum (strain ATCC 49511 / DSM 21280 / CIP 103535 / JIP02/86) protein is Ribosomal RNA small subunit methyltransferase G.